Here is a 1258-residue protein sequence, read N- to C-terminus: Regulator of G-protein signaling 22 (1258 aa).

The interval 581–604 (QQLGRSEPLNAVSSKDGGLEKGSK) is disordered. RGS domains follow at residues 845 to 973 (TFTD…ASRQ) and 1014 to 1138 (AFRK…TDEK). The segment at 1145 to 1172 (RRQEHKQKRKASDTEEDKAGKSGVKQYA) is disordered. The span at 1154–1164 (KASDTEEDKAG) shows a compositional bias: basic and acidic residues.

In terms of assembly, interacts with GNA11, GNA12 and GNA13. In terms of tissue distribution, expressed testis, including in Leydig cells and spermatogenic cells from the spermatogonia to spermatid stages (at protein level).

It localises to the cytoplasm. The protein localises to the nucleus. Functionally, inhibits signal transduction by increasing the GTPase activity of G protein alpha subunits thereby driving them into their inactive GDP-bound form. The polypeptide is Regulator of G-protein signaling 22 (Rgs22) (Mus musculus (Mouse)).